Consider the following 300-residue polypeptide: Ribosomal protein bS6--L-glutamate ligase (300 aa).

In terms of domain architecture, ATP-grasp spans 104–287 (LQLLARQGID…IAGRMIQWIE (184 aa)). ATP-binding positions include lysine 141, 178–179 (EY), aspartate 187, and 211–213 (RSN). Mg(2+) contacts are provided by aspartate 248, glutamate 260, and asparagine 262. Residues aspartate 248, glutamate 260, and asparagine 262 each contribute to the Mn(2+) site.

It belongs to the RimK family. The cofactor is Mg(2+). Mn(2+) serves as cofactor.

In terms of biological role, an L-glutamate ligase that catalyzes the ATP-dependent post-translational addition of glutamate residues to the C-terminus of ribosomal protein bS6 (RpsF). Is also able to catalyze the synthesis of poly-alpha-glutamate in vitro, via ATP hydrolysis from unprotected glutamate as substrate. The number of glutamate residues added to either RpsF or to poly-alpha-glutamate changes with pH. The protein is Ribosomal protein bS6--L-glutamate ligase of Salmonella agona (strain SL483).